The sequence spans 318 residues: tRNA uridine(34) hydroxylase (318 aa).

In terms of domain architecture, Rhodanese spans 123–217 (EDDDTVIIDA…YGKDPETKGQ (95 aa)). Catalysis depends on Cys-177, which acts as the Cysteine persulfide intermediate.

It belongs to the TrhO family.

It carries out the reaction uridine(34) in tRNA + AH2 + O2 = 5-hydroxyuridine(34) in tRNA + A + H2O. Catalyzes oxygen-dependent 5-hydroxyuridine (ho5U) modification at position 34 in tRNAs. This is tRNA uridine(34) hydroxylase from Staphylococcus aureus (strain Mu3 / ATCC 700698).